The following is a 284-amino-acid chain: MMSLDVIFILKSVIIAIVEGLTEFIPVSSTGHMILVGNLIDFKGQFAEMFEVVIQLGAILAVVVLYWKKIKDSVIEFFKFIFTGGKEGKIGFRFGMNVIIGCIPFAIIGVLFYDNIKSLFNLQSVIIGFIVGGILLLVVETLFRKKNHSTDNIDKITPIQALKVGTLQVLSAWPGMSRSASTIMGGWIAGLNSPTAAEFSFFLAVPAMVASSGKDLFEFDYSIMTPTLWIALVVGFIVAFIVSIIVMEKFVNFLKKKPMRVFAVYRIIMGVVLAVLAFTNIISV.

Helical transmembrane passes span 6–26 (VIFI…EFIP), 46–66 (FAEM…VVLY), 94–114 (FGMN…LFYD), 119–139 (LFNL…LLVV), 183–203 (IMGG…SFFL), 227–247 (TLWI…IIVM), and 262–282 (FAVY…TNII).

It belongs to the UppP family.

The protein resides in the cell membrane. It catalyses the reaction di-trans,octa-cis-undecaprenyl diphosphate + H2O = di-trans,octa-cis-undecaprenyl phosphate + phosphate + H(+). Its function is as follows. Catalyzes the dephosphorylation of undecaprenyl diphosphate (UPP). Confers resistance to bacitracin. This Clostridioides difficile (strain 630) (Peptoclostridium difficile) protein is Undecaprenyl-diphosphatase 2.